The sequence spans 445 residues: Reticulon-4 receptor-like 1 (445 aa).

An N-terminal signal peptide occupies residues 1 to 24 (MLRKGCCVELLLLLLAGELPLGGG). The region spanning 25-54 (CPRDCVCYPAPMTVSCQAHNFAAIPEGIPE) is the LRRNT domain. LRR repeat units lie at residues 55 to 76 (DSER…HFSP), 77 to 98 (AMVT…TFEG), 101 to 123 (HLEE…TFQG), 126 to 147 (KLHA…IFGG), 150 to 171 (SLQY…IFVD), 174 to 195 (NLSH…IFRG), 198 to 219 (NLDR…AFHD), and 222 to 243 (RLTT…CLAP). Positions 255–306 (NAWDCGCRARSLWEWLRRFRGSSSAVPCATPELRQGQDLKLLRVEDFRNCTG) constitute an LRRCT domain. Disordered regions lie at residues 307–377 (PVSP…SGKE) and 401–424 (RPKR…QQAS). 2 stretches are compositionally biased toward basic residues: residues 352 to 366 (GYKK…HRNR) and 401 to 413 (RPKR…RRTP). Residue Ser-424 is the site of GPI-anchor amidated serine attachment. The chain crosses the membrane as a helical span at residues 424-444 (SSGTALGAPLLAWILGLAVTL). A propeptide spans 425-445 (SGTALGAPLLAWILGLAVTLR) (removed in mature form).

Belongs to the Nogo receptor family. As to quaternary structure, identified in a complex that contains RTN4R, RTN4RL1 and NGFR; the interaction depends on the presence of chondroitin sulfate proteoglycans. Does not interact with MAG, OMG and RTN4. In terms of tissue distribution, detected in brain (at protein level). Detected in retina ganglion cell layer and inner nuclear layer.

It is found in the cell membrane. The protein resides in the membrane raft. The protein localises to the perikaryon. It localises to the cell projection. Cell surface receptor that plays a functionally redundant role in postnatal brain development and in regulating axon regeneration in the adult central nervous system. Contributes to normal axon migration across the brain midline and normal formation of the corpus callosum. Protects motoneurons against apoptosis; protection against apoptosis is probably mediated by MAG. Plays a role in inhibiting neurite outgrowth and axon regeneration via its binding to neuronal chondroitin sulfate proteoglycans. Binds heparin. Like other family members, plays a role in restricting the number dendritic spines and the number of synapses that are formed during brain development. Signaling mediates activation of Rho and downstream reorganization of the actin cytoskeleton. The sequence is that of Reticulon-4 receptor-like 1 from Mus musculus (Mouse).